We begin with the raw amino-acid sequence, 175 residues long: Probable RNA-binding protein EIF1AD (175 aa).

In terms of domain architecture, S1-like spans 5–89 (TKKRYITNKV…VKGEIEYILD (85 aa)). The span at 116–128 (EAKRGQTSDKMID) shows a compositional bias: basic and acidic residues. A disordered region spans residues 116–175 (EAKRGQTSDKMIDDDMLPPSESEEEDESEGEETYDEDDVDDEEEEEFDTYNPNRMQAPSK). The segment covering 129–163 (DDMLPPSESEEEDESEGEETYDEDDVDDEEEEEFD) has biased composition (acidic residues). Over residues 165-175 (YNPNRMQAPSK) the composition is skewed to polar residues.

It belongs to the EIF1AD family.

This Caenorhabditis elegans protein is Probable RNA-binding protein EIF1AD.